The sequence spans 303 residues: Putative ankyrin repeat protein R601 (303 aa).

ANK repeat units follow at residues 86–115 (DDNM…DVTV), 117–146 (NNFA…DITV), 147–176 (DNYF…NVDS), and 200–233 (NADV…DVSY).

In Acanthamoeba polyphaga (Amoeba), this protein is Putative ankyrin repeat protein R601.